The primary structure comprises 159 residues: Small ribosomal subunit protein uS4 (159 aa).

One can recognise an S4 RNA-binding domain in the interval 106 to 158; the sequence is RRLQTIVYRMGLAKSIYHARQLIVHGHIAIEGRRVTSPGFLVPRELEDKITLV.

This sequence belongs to the universal ribosomal protein uS4 family. In terms of assembly, part of the 30S ribosomal subunit. Contacts protein S5. The interaction surface between S4 and S5 is involved in control of translational fidelity.

In terms of biological role, one of the primary rRNA binding proteins, it binds directly to 16S rRNA where it nucleates assembly of the body of the 30S subunit. With S5 and S12 plays an important role in translational accuracy. The protein is Small ribosomal subunit protein uS4 of Pyrobaculum arsenaticum (strain DSM 13514 / JCM 11321 / PZ6).